We begin with the raw amino-acid sequence, 446 residues long: Methionine aminopeptidase 2 (446 aa).

Residues 1 to 85 (MAGVTEGEDT…KNKKKKKKKI (85 aa)) form a disordered region. Basic and acidic residues predominate over residues 8–32 (EDTKVIESKINELNIDKPKLEDNNE). Positions 42-58 (SGDDDDDDKEEDDDNEI) are enriched in acidic residues. A compositionally biased stretch (basic residues) spans 73-85 (KKNKNKKKKKKKI). His-197 is a substrate binding site. Positions 217, 228, and 299 each coordinate a divalent metal cation. His-307 contacts substrate. The a divalent metal cation site is built by Glu-332 and Glu-427.

This sequence belongs to the peptidase M24A family. Methionine aminopeptidase eukaryotic type 2 subfamily. It depends on Co(2+) as a cofactor. Requires Zn(2+) as cofactor. The cofactor is Mn(2+). Fe(2+) serves as cofactor.

It is found in the cytoplasm. The catalysed reaction is Release of N-terminal amino acids, preferentially methionine, from peptides and arylamides.. Its function is as follows. Cotranslationally removes the N-terminal methionine from nascent proteins. The N-terminal methionine is often cleaved when the second residue in the primary sequence is small and uncharged (Met-Ala-, Cys, Gly, Pro, Ser, Thr, or Val). The protein is Methionine aminopeptidase 2 of Candida albicans (strain SC5314 / ATCC MYA-2876) (Yeast).